The sequence spans 146 residues: 3-dehydroquinate dehydratase (146 aa).

Tyr23 functions as the Proton acceptor in the catalytic mechanism. Substrate is bound by residues Asn74, His80, and Asp87. Catalysis depends on His100, which acts as the Proton donor. Substrate contacts are provided by residues 101 to 102 and Arg111; that span reads IS.

Belongs to the type-II 3-dehydroquinase family. Homododecamer.

It carries out the reaction 3-dehydroquinate = 3-dehydroshikimate + H2O. It participates in metabolic intermediate biosynthesis; chorismate biosynthesis; chorismate from D-erythrose 4-phosphate and phosphoenolpyruvate: step 3/7. Catalyzes a trans-dehydration via an enolate intermediate. This is 3-dehydroquinate dehydratase from Bacillus cytotoxicus (strain DSM 22905 / CIP 110041 / 391-98 / NVH 391-98).